We begin with the raw amino-acid sequence, 532 residues long: Bifunctional purine biosynthesis protein PurH (532 aa).

The 147-residue stretch at 1–147 folds into the MGS-like domain; the sequence is MAKIKRALIS…KNYRSVTVVT (147 aa).

This sequence belongs to the PurH family.

It catalyses the reaction (6R)-10-formyltetrahydrofolate + 5-amino-1-(5-phospho-beta-D-ribosyl)imidazole-4-carboxamide = 5-formamido-1-(5-phospho-D-ribosyl)imidazole-4-carboxamide + (6S)-5,6,7,8-tetrahydrofolate. The enzyme catalyses IMP + H2O = 5-formamido-1-(5-phospho-D-ribosyl)imidazole-4-carboxamide. It participates in purine metabolism; IMP biosynthesis via de novo pathway; 5-formamido-1-(5-phospho-D-ribosyl)imidazole-4-carboxamide from 5-amino-1-(5-phospho-D-ribosyl)imidazole-4-carboxamide (10-formyl THF route): step 1/1. It functions in the pathway purine metabolism; IMP biosynthesis via de novo pathway; IMP from 5-formamido-1-(5-phospho-D-ribosyl)imidazole-4-carboxamide: step 1/1. The chain is Bifunctional purine biosynthesis protein PurH from Magnetococcus marinus (strain ATCC BAA-1437 / JCM 17883 / MC-1).